Here is an 894-residue protein sequence, read N- to C-terminus: ABC-transporter-regulating transcription factor (894 aa).

The zn(2)-C6 fungal-type DNA-binding region spans 71-98; sequence CDMCRKKKIKCDGKMPKCSHCINYRTDC. The span at 159–174 shows a compositional bias: polar residues; the sequence is NTALNSLKSPTNKFNG. Residues 159-219 form a disordered region; the sequence is NTALNSLKSP…PKESETEVEG (61 aa). Over residues 175-189 the composition is skewed to low complexity; sequence SSATSQSQHTTASRH. A compositionally biased stretch (polar residues) spans 199-210; that stretch reads SPHTAATSPNSP. A helical membrane pass occupies residues 649 to 669; sequence CVWLILYYPVSALVTLFANIL. Residues 724-797 are disordered; the sequence is AEKESHSKKK…MSNPTRAFAP (74 aa). A compositionally biased stretch (basic and acidic residues) spans 736-750; that stretch reads AAPDEPQDLRQKTPD. 2 stretches are compositionally biased toward polar residues: residues 751 to 761 and 771 to 792; these read ENSVPSPSTKR and LFPSSSYPINLGNTGPDMSNPT.

The protein resides in the nucleus. It localises to the membrane. Its function is as follows. Transcription factor that regulates expression of the genes related to resistance to azole compounds. This chain is ABC-transporter-regulating transcription factor, found in Aspergillus oryzae (strain ATCC 42149 / RIB 40) (Yellow koji mold).